The chain runs to 1093 residues: Non-canonical non-ribosomal peptide synthetase ascB (1093 aa).

Positions 1 to 26 are enriched in low complexity; that stretch reads MTVNGHHTNGVNGANGTNGHANGSNG. A disordered region spans residues 1-27; sequence MTVNGHHTNGVNGANGTNGHANGSNGI. An adenylation (A) domain region spans residues 35-392; the sequence is EIVPFVKPQV…LSLTFAPTDN (358 aa). In terms of domain architecture, Carrier spans 591–678; that stretch reads DNLEQNLKSL…EIAAALTKGS (88 aa). The residue at position 627 (Ser-627) is an O-(pantetheine 4'-phosphoryl)serine. A thioester reductase (TR) domain region spans residues 721 to 971; sequence LTGATGSLGS…IPVDDAASTV (251 aa).

This sequence belongs to the NRP synthetase family.

The catalysed reaction is ilicicolinate B + AH2 + ATP = ilicicolin B + A + AMP + diphosphate. Its pathway is secondary metabolite biosynthesis; terpenoid biosynthesis. Its function is as follows. Non-canonical non-ribosomal peptide synthetase; part of the asc-1 gene cluster that mediates the biosynthesis of both ascochlorin and ascofuranone, a strong inhibitor of cyanide-insensitive alternative oxidases and a promising drug candidate against African trypanosomiasis. The first step in the pathway is performed by the non-reducing polyketide synthase ascC that produces orsellinic acid by condensing acetyl-CoA with 3 malonyl-CoA units. Orsellinic acid is then prenylated by the prenyltransferase ascA to yield ilicicolinic acid B. Ilicicolinic acid B is further reduced to ilicicolin B by the reductase ascB. The halogenase ascD then chlorinates ilicicolin B to produce ilicicolin A which is converted to ilicicolin A epoxide by the cytochrome P450 monooxygenase ascE that catalyzes stereoselective epoxidation of the terminal double bond of the prenyl group. Ilicicolin A epoxide is the last common precursor for the biosynthesis of ascofuranone and ascochlorin. The terpene cyclase ascF produces a monocyclic terpene, and the cyclization reaction is proposed to be initiated by protonation of the terminal epoxide of ilicicolin A epoxide to generate a monocyclic tertiarycation, which is followed by a series of hydride and methyl shifts with abstraction of proton, leading to the formation of the (14S,15R,19R)-trimethylcyclohexanone ring structure of ilicicolin C, which is finally reduced to ascochlorin by the dehydrogenase ascG. On the other hand, ilicicolin A epoxide is hydroxylated by the cytochrome P450 monooxygenase ascH, and the resultant product is cyclized by the terpene cyclase ascI to ascofuranol via protonation-initiated epoxide ring opening, which facilitates the 6-endo-tet cyclization to form the tetrahy-drofuran ring. Finally, ascofuranol is oxidized into ascofuranone by ascJ. This Acremonium egyptiacum (Oospora egyptiaca) protein is Non-canonical non-ribosomal peptide synthetase ascB.